The sequence spans 165 residues: Large ribosomal subunit protein uL11A (165 aa).

A N,N-dimethylproline; by NTM1 modification is found at P2. 2 positions are modified to N6,N6,N6-trimethyllysine; by RKM2: K4 and K11. 2 positions are modified to phosphoserine: S25 and S38. R67 is subject to N5-methylarginine; by RMT2. Residues K130 and K146 each participate in a glycyl lysine isopeptide (Lys-Gly) (interchain with G-Cter in ubiquitin) cross-link.

Belongs to the universal ribosomal protein uL11 family. As to quaternary structure, component of the large ribosomal subunit (LSU). Mature yeast ribosomes consist of a small (40S) and a large (60S) subunit. The 40S small subunit contains 1 molecule of ribosomal RNA (18S rRNA) and 33 different proteins (encoded by 57 genes). The large 60S subunit contains 3 rRNA molecules (25S, 5.8S and 5S rRNA) and 46 different proteins (encoded by 81 genes). It appears that the main modified species for L12 contains 6 methyl groups, 2 on Pro-2, 3 on Lys-4 and 1 on Arg-67. Although not reproduced with a second method, methylation at Lys-11 cannot be ruled out.

Its subcellular location is the cytoplasm. In terms of biological role, component of the ribosome, a large ribonucleoprotein complex responsible for the synthesis of proteins in the cell. The small ribosomal subunit (SSU) binds messenger RNAs (mRNAs) and translates the encoded message by selecting cognate aminoacyl-transfer RNA (tRNA) molecules. The large subunit (LSU) contains the ribosomal catalytic site termed the peptidyl transferase center (PTC), which catalyzes the formation of peptide bonds, thereby polymerizing the amino acids delivered by tRNAs into a polypeptide chain. The nascent polypeptides leave the ribosome through a tunnel in the LSU and interact with protein factors that function in enzymatic processing, targeting, and the membrane insertion of nascent chains at the exit of the ribosomal tunnel. The sequence is that of Large ribosomal subunit protein uL11A from Saccharomyces cerevisiae (strain ATCC 204508 / S288c) (Baker's yeast).